We begin with the raw amino-acid sequence, 60 residues long: Large ribosomal subunit protein bL32 (60 aa).

The protein belongs to the bacterial ribosomal protein bL32 family.

This Streptococcus pneumoniae serotype 4 (strain ATCC BAA-334 / TIGR4) protein is Large ribosomal subunit protein bL32.